Consider the following 241-residue polypeptide: Probable transcriptional regulatory protein LMOf2365_1554 (241 aa).

The span at 1–14 shows a compositional bias: polar residues; the sequence is MSGHSKWNNIQGRK. The interval 1 to 22 is disordered; the sequence is MSGHSKWNNIQGRKNAQDSKRS.

Belongs to the TACO1 family.

It is found in the cytoplasm. The sequence is that of Probable transcriptional regulatory protein LMOf2365_1554 from Listeria monocytogenes serotype 4b (strain F2365).